Consider the following 467-residue polypeptide: E3 ubiquitin-protein ligase TRIM11 (467 aa).

An RING-type zinc finger spans residues 16-57 (CAICLDYFTDPVMTDCGHNFCRECIRRCWGQPEGPYACPECR). Serine 85 is subject to Phosphoserine. The B box-type zinc finger occupies 87–127 (VPQGVCAAHREPLTTFCGDDLSLLCPTCERSEHWAHRVRPL). Positions 92, 95, 114, and 119 each coordinate Zn(2+). The stretch at 127–207 (LQEAADDLKG…KLEEEELEVL (81 aa)) forms a coiled coil. The region spanning 267–460 (ELRTVCRVPG…MTICRLIGVS (194 aa)) is the B30.2/SPRY domain. Basic and acidic residues predominate over residues 304-313 (DRRSVQRGEQ). The segment at 304-325 (DRRSVQRGEQRQALPDSPERFD) is disordered.

Belongs to the TRIM/RBCC family. As to quaternary structure, binds cytoplasmic tail of integrin alpha-1. Interacts with the HN peptide. Interacts with PHOX2B. Interacts (when autoubiquitinated) with SQSTM1/p62; promoting AIM2 recruitment to autophagosomes. Interacts with AIM2; promoting its autophagy-dependent degradation. Autoubiquitinated upon DNA stimulation; autoubiquitination promotes interaction with SQSTM1/p62 and recruitment of AIM2 to autophagosomes.

It is found in the cytoplasm. Its subcellular location is the nucleus. It catalyses the reaction S-ubiquitinyl-[E2 ubiquitin-conjugating enzyme]-L-cysteine + [acceptor protein]-L-lysine = [E2 ubiquitin-conjugating enzyme]-L-cysteine + N(6)-ubiquitinyl-[acceptor protein]-L-lysine.. The protein operates within protein modification; protein ubiquitination. E3 ubiquitin-protein ligase that promotes the degradation of insoluble ubiquitinated proteins, including insoluble PAX6, poly-Gln repeat expanded HTT and poly-Ala repeat expanded ARX. Mediates PAX6 ubiquitination leading to proteasomal degradation, thereby modulating cortical neurogenesis. May also inhibit PAX6 transcriptional activity, possibly in part by preventing the binding of PAX6 to its consensus sequences. May contribute to the regulation of the intracellular level of HN (humanin) or HN-containing proteins through the proteasomal degradation pathway. Mediates MED15 ubiquitination leading to proteasomal degradation. May contribute to the innate restriction of retroviruses. Upon overexpression, reduces HIV-1 and murine leukemia virus infectivity, by suppressing viral gene expression. Antiviral activity depends on a functional E3 ubiquitin-protein ligase domain. May regulate TRIM5 turnover via the proteasome pathway, thus counteracting the TRIM5-mediated cross-species restriction of retroviral infection at early stages of the retroviral life cycle. Acts as an inhibitor of the AIM2 inflammasome by promoting autophagy-dependent degradation of AIM2. Mechanistically, undergoes autoubiquitination upon DNA stimulation, promoting interaction with AIM2 and SQSTM1/p62, leading to AIM2 recruitment to autophagosomes. This is E3 ubiquitin-protein ligase TRIM11 (Trim11) from Rattus norvegicus (Rat).